We begin with the raw amino-acid sequence, 449 residues long: Heterogeneous nuclear ribonucleoprotein H (449 aa).

The residue at position 1 (Met-1) is an N-acetylmethionine. Met-2 carries the N-acetylmethionine; in Heterogeneous nuclear ribonucleoprotein H, N-terminally processed modification. One can recognise an RRM 1 domain in the interval 11-90; the sequence is FVVKVRGLPW…RYVEVFKSNN (80 aa). The residue at position 23 (Ser-23) is a Phosphoserine. Residue Lys-35 forms a Glycyl lysine isopeptide (Lys-Gly) (interchain with G-Cter in SUMO2) linkage. 2 positions are modified to phosphoserine: Ser-54 and Ser-63. Glycyl lysine isopeptide (Lys-Gly) (interchain with G-Cter in SUMO2) cross-links involve residues Lys-87 and Lys-98. Residues 111-188 form the RRM 2 domain; it reads GFVRLRGLPF…RYIEIFKSSR (78 aa). Arg-233 bears the Dimethylated arginine; alternate mark. Arg-233 bears the Omega-N-methylarginine; alternate mark. One copy of the 1-1 repeat lies at 234–249; it reads GAYGGGYGGYDDYNGY. The tract at residues 234–433 is 2 X 16 AA Gly-rich approximate repeats; that stretch reads GAYGGGYGGY…YGGQSSMSGY (200 aa). At Tyr-246 the chain carries Phosphotyrosine. An RRM 3 domain is found at 289 to 364; sequence HCVHMRGLPY…RYVELFLNST (76 aa). A Phosphoserine modification is found at Ser-310. 3 tandem repeats follow at residues 354–372, 374–392, and 418–433. The segment at 354 to 392 is 2 X 19 AA perfect repeats; the sequence is HRYVELFLNSTAGASGGAYEHRYVELFLNSTAGASGGAY.

Part of a ternary complex containing FUBP2, PTBP1, PTBP2 and HNRNPH1. Identified in the spliceosome C complex. Interacts with IGF2BP1. Interacts with CUGBP1; the interaction is RNA-dependent. Interacts with MBNL1; the interaction in RNA-independent.

It is found in the nucleus. The protein resides in the nucleoplasm. Functionally, this protein is a component of the heterogeneous nuclear ribonucleoprotein (hnRNP) complexes which provide the substrate for the processing events that pre-mRNAs undergo before becoming functional, translatable mRNAs in the cytoplasm. Mediates pre-mRNA alternative splicing regulation. Inhibits, together with CUGBP1, insulin receptor (IR) pre-mRNA exon 11 inclusion in myoblast. Binds to the IR RNA. Binds poly(RG). This Mus musculus (Mouse) protein is Heterogeneous nuclear ribonucleoprotein H (Hnrnph1).